A 239-amino-acid chain; its full sequence is Splicing factor U2AF 35 kDa subunit (239 aa).

Ala-2 is modified (N-acetylalanine). The C3H1-type 1 zinc finger occupies 12–40 (EKDKVNCSFYFKIGACRHGDRCSRLHNKP). Residue Lys-39 is modified to N6-methyllysine. Ser-61 and Ser-145 each carry phosphoserine. The region spanning 65–147 (LRCAVSDVEM…QPIHAELSPV (83 aa)) is the RRM domain. The segment at 149–176 (DFREACCRQYEMGECTRGGFCNFMHLKP) adopts a C3H1-type 2 zinc-finger fold. Arg-165 bears the Omega-N-methylarginine mark. The disordered stretch occupies residues 183–239 (RELYGRRRKKHRSRSRSRERRSRSRDRGRGGGGGGGGGGGRERDRRRSRDRERSGRF). A compositionally biased stretch (basic residues) spans 188–208 (RRRKKHRSRSRSRERRSRSRD). Gly residues predominate over residues 212–221 (GGGGGGGGGG). A compositionally biased stretch (basic and acidic residues) spans 222-239 (GRERDRRRSRDRERSGRF).

This sequence belongs to the splicing factor SR family. Identified in the spliceosome C complex. Heterodimer with U2AF2. Interacts (via RS domain) with PHF5A (via N-terminus). Interacts with ZRANB2. Interacts with SDE2. Interacts with SF3B1. As to expression, expressed in primary spermatocytes and elongating spermatids (at protein level).

The protein localises to the nucleus. It localises to the nucleus speckle. In terms of biological role, plays a critical role in both constitutive and enhancer-dependent splicing by mediating protein-protein interactions and protein-RNA interactions required for accurate 3'-splice site selection. Recruits U2 snRNP to the branch point. Directly mediates interactions between U2AF2 and proteins bound to the enhancers and thus may function as a bridge between U2AF2 and the enhancer complex to recruit it to the adjacent intron. The chain is Splicing factor U2AF 35 kDa subunit (U2af1) from Mus musculus (Mouse).